Reading from the N-terminus, the 114-residue chain is U-myrmeciitoxin(01)-Mg8a (114 aa).

The signal sequence occupies residues 1–20; it reads MKLSTLLVAFVLLVITVILS. Residues 21 to 44 constitute a propeptide that is removed on maturation; it reads TPSTNAKALAESNALAVAVSEAEP.

The protein belongs to the formicidae venom precursor-01 superfamily. As to expression, expressed by the venom gland.

It is found in the secreted. Its function is as follows. May have antimicrobial properties, like most ant linear peptides. This chain is U-myrmeciitoxin(01)-Mg8a, found in Myrmecia gulosa (Red bulldog ant).